The sequence spans 607 residues: Autophagy-related protein 22-2 (607 aa).

The tract at residues 9–31 (FQSPSPDEGVQQRPPRYVGEDTT) is disordered. The helical transmembrane segment at 44 to 64 (YGIAAEVFAVCGVGSFLPLTL) threads the bilayer. N-linked (GlcNAc...) asparagine glycosylation is found at asparagine 88 and asparagine 91. 3 helical membrane passes run 111–131 (SFAMYTFSLAVLIQALTLISF), 143–160 (TLLMVFGFAGALASMLFV), and 161–178 (FIAPPLFVIGSILVVVGV). Residues 203 to 263 (QEGKADDGTE…GMGTKAPLSS (61 aa)) are disordered. The N-linked (GlcNAc...) asparagine glycan is linked to asparagine 235. The next 8 helical transmembrane spans lie at 277 to 297 (GIGLGYCAAVFVQIISIIMLL), 310 to 330 (TLPMRFVLLLVGIWWGAFTLV), 381 to 401 (VLIFLVAWFLLSDAMATVSGT), 415 to 435 (PLIGLLSITATLSGMTGAFLW), 450 to 470 (IILCIALFEMIPLYGLLAYIP), 484 to 504 (WEIFPLAIVHGVVSGGLASYC), 521 to 543 (YALYAATDKGSSFIGPAIVGGIV), and 552 to 572 (GFFFMAILIVLPIPLVWMVNA). A disordered region spans residues 585–607 (TLGKSHGGPAEDAQEAEGLLARE).

The protein belongs to the ATG22 family.

The protein localises to the vacuole membrane. In terms of biological role, vacuolar effluxer which mediate the efflux of amino acids resulting from autophagic degradation. The release of autophagic amino acids allows the maintenance of protein synthesis and viability during nitrogen starvation. This is Autophagy-related protein 22-2 (atg22-2) from Penicillium rubens (strain ATCC 28089 / DSM 1075 / NRRL 1951 / Wisconsin 54-1255) (Penicillium chrysogenum).